The following is a 138-amino-acid chain: Putative pre-16S rRNA nuclease (138 aa).

This sequence belongs to the YqgF nuclease family.

The protein resides in the cytoplasm. Its function is as follows. Could be a nuclease involved in processing of the 5'-end of pre-16S rRNA. The polypeptide is Putative pre-16S rRNA nuclease (Polaromonas sp. (strain JS666 / ATCC BAA-500)).